A 567-amino-acid polypeptide reads, in one-letter code: Eukaryotic translation initiation factor 3 subunit D (567 aa).

2 disordered regions span residues 12 to 34 (PVKS…YAPF) and 122 to 160 (GQNV…RGRR). A compositionally biased stretch (gly residues) spans 128 to 142 (GGRGGRYGSSGGRGA). The segment at 300-314 (PFDYLTVNENAYDSP) is RNA gate.

The protein belongs to the eIF-3 subunit D family. Component of the eukaryotic translation initiation factor 3 (eIF-3) complex. The eIF-3 complex appears to include tif32/eif3a, SPAC25G10.08/eif3b, tif33/eif3c, SPBC4C3.07/eif3f, tif35/eif3g and sum1/eif3i. This set of common subunits may also associate exclusively with either moe1/eif3d and int6/eif3e, or with SPAC821.05/eif3h and SPAC1751.03/eif3m. The eIF-3 complex may also include SPAC3A12.13c/eif3j.

The protein resides in the cytoplasm. Functionally, mRNA cap-binding component of the eukaryotic translation initiation factor 3 (eIF-3) complex, which is involved in protein synthesis of a specialized repertoire of mRNAs and, together with other initiation factors, stimulates binding of mRNA and methionyl-tRNAi to the 40S ribosome. The eIF-3 complex specifically targets and initiates translation of a subset of mRNAs involved in cell proliferation. In the eIF-3 complex, eif3d specifically recognizes and binds the 7-methylguanosine cap of a subset of mRNAs. The polypeptide is Eukaryotic translation initiation factor 3 subunit D (moe1) (Schizosaccharomyces pombe (strain 972 / ATCC 24843) (Fission yeast)).